The chain runs to 304 residues: N-acetylmuramic acid 6-phosphate etherase (304 aa).

In terms of domain architecture, SIS spans isoleucine 62–lysine 225. Catalysis depends on glutamate 90, which acts as the Proton donor. Residue glutamate 121 is part of the active site.

It belongs to the GCKR-like family. MurNAc-6-P etherase subfamily. As to quaternary structure, homodimer.

The catalysed reaction is N-acetyl-D-muramate 6-phosphate + H2O = N-acetyl-D-glucosamine 6-phosphate + (R)-lactate. It participates in amino-sugar metabolism; 1,6-anhydro-N-acetylmuramate degradation. It functions in the pathway amino-sugar metabolism; N-acetylmuramate degradation. Its pathway is cell wall biogenesis; peptidoglycan recycling. In terms of biological role, specifically catalyzes the cleavage of the D-lactyl ether substituent of MurNAc 6-phosphate, producing GlcNAc 6-phosphate and D-lactate. Together with AnmK, is also required for the utilization of anhydro-N-acetylmuramic acid (anhMurNAc) either imported from the medium or derived from its own cell wall murein, and thus plays a role in cell wall recycling. The protein is N-acetylmuramic acid 6-phosphate etherase of Glaesserella parasuis serovar 5 (strain SH0165) (Haemophilus parasuis).